We begin with the raw amino-acid sequence, 157 residues long: MAEKLRMAARVFVYGTLKRGEPNHHWLTKKENGQARFLGRGKTETKFPLVVGTRYNIPFLLARPGEGNHIEGEVYEVDETMLSKLDILEDYPDYYDREQQTILMEQNETIQCWLYLIRNFPDKMLAKELLISYHNTPERPYNEKSVRTVSARDDLSY.

Residue 14–17 (YGTL) coordinates substrate. Glu-89 serves as the catalytic Proton acceptor.

The protein belongs to the gamma-glutamylcyclotransferase family.

Functionally, putative gamma-glutamylcyclotransferase. This Drosophila melanogaster (Fruit fly) protein is Putative gamma-glutamylcyclotransferase CG2811.